Here is a 183-residue protein sequence, read N- to C-terminus: ATP-dependent protease subunit HslV (183 aa).

Thr-7 is a catalytic residue. The Na(+) site is built by Gly-162, Cys-165, and Thr-168.

Belongs to the peptidase T1B family. HslV subfamily. In terms of assembly, a double ring-shaped homohexamer of HslV is capped on each side by a ring-shaped HslU homohexamer. The assembly of the HslU/HslV complex is dependent on binding of ATP.

Its subcellular location is the cytoplasm. The enzyme catalyses ATP-dependent cleavage of peptide bonds with broad specificity.. With respect to regulation, allosterically activated by HslU binding. Its function is as follows. Protease subunit of a proteasome-like degradation complex believed to be a general protein degrading machinery. In Chromobacterium violaceum (strain ATCC 12472 / DSM 30191 / JCM 1249 / CCUG 213 / NBRC 12614 / NCIMB 9131 / NCTC 9757 / MK), this protein is ATP-dependent protease subunit HslV.